Consider the following 61-residue polypeptide: Short neurotoxin 4 (61 aa).

4 disulfides stabilise this stretch: Cys-3-Cys-23, Cys-17-Cys-40, Cys-42-Cys-53, and Cys-54-Cys-59.

The protein belongs to the three-finger toxin family. Short-chain subfamily. Type I alpha-neurotoxin sub-subfamily. Expressed by the venom gland.

It localises to the secreted. Binds to muscle nicotinic acetylcholine receptor (nAChR) and inhibit acetylcholine from binding to the receptor, thereby impairing neuromuscular transmission. The polypeptide is Short neurotoxin 4 (Naja annulifera (Banded Egyptian cobra)).